The sequence spans 192 residues: Ribose 1,5-bisphosphate phosphokinase PhnN (192 aa).

Residue 15–22 (GPSGAGKD) participates in ATP binding.

This sequence belongs to the ribose 1,5-bisphosphokinase family.

It catalyses the reaction alpha-D-ribose 1,5-bisphosphate + ATP = 5-phospho-alpha-D-ribose 1-diphosphate + ADP. The protein operates within metabolic intermediate biosynthesis; 5-phospho-alpha-D-ribose 1-diphosphate biosynthesis; 5-phospho-alpha-D-ribose 1-diphosphate from D-ribose 5-phosphate (route II): step 3/3. Functionally, catalyzes the phosphorylation of ribose 1,5-bisphosphate to 5-phospho-D-ribosyl alpha-1-diphosphate (PRPP). In Brucella abortus biovar 1 (strain 9-941), this protein is Ribose 1,5-bisphosphate phosphokinase PhnN.